The following is a 389-amino-acid chain: Acetate kinase (389 aa).

N9 provides a ligand contact to Mg(2+). K16 provides a ligand contact to ATP. R77 contributes to the substrate binding site. Residue D134 is the Proton donor/acceptor of the active site. Residues 194–198 (HLGNG), 268–270 (DFR), and 316–320 (GVGEN) each bind ATP. E370 contacts Mg(2+).

The protein belongs to the acetokinase family. In terms of assembly, homodimer. It depends on Mg(2+) as a cofactor. Requires Mn(2+) as cofactor.

The protein resides in the cytoplasm. It carries out the reaction acetate + ATP = acetyl phosphate + ADP. The protein operates within metabolic intermediate biosynthesis; acetyl-CoA biosynthesis; acetyl-CoA from acetate: step 1/2. In terms of biological role, catalyzes the formation of acetyl phosphate from acetate and ATP. Can also catalyze the reverse reaction. This Mycolicibacterium vanbaalenii (strain DSM 7251 / JCM 13017 / BCRC 16820 / KCTC 9966 / NRRL B-24157 / PYR-1) (Mycobacterium vanbaalenii) protein is Acetate kinase.